The sequence spans 453 residues: Probable glycine dehydrogenase (decarboxylating) subunit 1 (453 aa).

The protein belongs to the GcvP family. N-terminal subunit subfamily. As to quaternary structure, the glycine cleavage system is composed of four proteins: P, T, L and H. In this organism, the P 'protein' is a heterodimer of two subunits.

The enzyme catalyses N(6)-[(R)-lipoyl]-L-lysyl-[glycine-cleavage complex H protein] + glycine + H(+) = N(6)-[(R)-S(8)-aminomethyldihydrolipoyl]-L-lysyl-[glycine-cleavage complex H protein] + CO2. The glycine cleavage system catalyzes the degradation of glycine. The P protein binds the alpha-amino group of glycine through its pyridoxal phosphate cofactor; CO(2) is released and the remaining methylamine moiety is then transferred to the lipoamide cofactor of the H protein. This Dictyoglomus thermophilum (strain ATCC 35947 / DSM 3960 / H-6-12) protein is Probable glycine dehydrogenase (decarboxylating) subunit 1.